The following is a 345-amino-acid chain: uncharacterized protein (345 aa).

This is an uncharacterized protein from Acidianus filamentous virus 2 (isolate Italy/Pozzuoli) (AFV-2).